Consider the following 89-residue polypeptide: Exodeoxyribonuclease 7 small subunit (89 aa).

Belongs to the XseB family. In terms of assembly, heterooligomer composed of large and small subunits.

The protein localises to the cytoplasm. It carries out the reaction Exonucleolytic cleavage in either 5'- to 3'- or 3'- to 5'-direction to yield nucleoside 5'-phosphates.. In terms of biological role, bidirectionally degrades single-stranded DNA into large acid-insoluble oligonucleotides, which are then degraded further into small acid-soluble oligonucleotides. This chain is Exodeoxyribonuclease 7 small subunit, found in Chlorobium phaeobacteroides (strain DSM 266 / SMG 266 / 2430).